The primary structure comprises 462 residues: Protein MOS2 (462 aa).

Residues 1–10 are compositionally biased toward low complexity; that stretch reads MKLSFSLPSK. The interval 1–32 is disordered; that stretch reads MKLSFSLPSKSKPKVTATTADGNNAVDDGTSK. Positions 156–202 constitute a G-patch domain; it reads VDGFGAALMAGYGWKPGKGIGKNAKEDVEIKEYKKWTAKEGLGFDPD. Residues 231-258 form the KOW 1 domain; that stretch reads VFFVGKEVRIIAGRDVGLKGKIVEKPGS. Positions 301 to 336 are enriched in basic and acidic residues; it reads DREKDKKTSGRGRGAERGSRSEVRASEKQDRGQTRE. The interval 301 to 340 is disordered; the sequence is DREKDKKTSGRGRGAERGSRSEVRASEKQDRGQTRERKVK. In terms of domain architecture, KOW 2 spans 401–428; sequence LPRRGGPVLVLSGKHKGVYGNLVEKDLD.

The protein belongs to the MOS2 family.

The protein resides in the nucleus. Its function is as follows. Required for innate and induced resistance to pathogens such as compatible and incompatible isolates of P.syringae and P.parasitica. The protein is Protein MOS2 (MOS2) of Arabidopsis thaliana (Mouse-ear cress).